A 525-amino-acid chain; its full sequence is NAD(P)H-quinone oxidoreductase subunit 2 (525 aa).

14 consecutive transmembrane segments (helical) span residues 14 to 34, 42 to 62, 78 to 98, 117 to 137, 167 to 187, 201 to 221, 240 to 260, 276 to 296, 302 to 322, 330 to 350, 374 to 394, 396 to 416, 462 to 482, and 494 to 514; these read AIWPEVVVTLTLLIVLVVDLV, SLPALSLFGLLGALVTLVLQW, PVSILFRGLVVATAALTVMMA, LTATLGGMFLAGATDLIMVFV, LLTGASSTAIFLYGMSLLYGL, LANAGLVGILALVFCLGGIGF, PTPVVAFLSVGSKAAGFALAI, AVLSVLAILTMVLGNVVAIAQ, LLAYSSIGQAGFVLIGLVAGT, IFYLMVYLAMNLGAFLCVTLF, LCLSICLLSLGGLPPLAGFFG, LYLFWAGWQAGEYTLVLVGLV, VGMVVTLVATIFAGILSNPLF, and FLGFPTAQAFAPGSASPSLAV.

This sequence belongs to the complex I subunit 2 family. NDH-1 can be composed of about 15 different subunits; different subcomplexes with different compositions have been identified which probably have different functions.

The protein localises to the cellular thylakoid membrane. It catalyses the reaction a plastoquinone + NADH + (n+1) H(+)(in) = a plastoquinol + NAD(+) + n H(+)(out). It carries out the reaction a plastoquinone + NADPH + (n+1) H(+)(in) = a plastoquinol + NADP(+) + n H(+)(out). Its function is as follows. NDH-1 shuttles electrons from an unknown electron donor, via FMN and iron-sulfur (Fe-S) centers, to quinones in the respiratory and/or the photosynthetic chain. The immediate electron acceptor for the enzyme in this species is believed to be plastoquinone. Couples the redox reaction to proton translocation, and thus conserves the redox energy in a proton gradient. Cyanobacterial NDH-1 also plays a role in inorganic carbon-concentration. This chain is NAD(P)H-quinone oxidoreductase subunit 2, found in Synechococcus sp. (strain JA-3-3Ab) (Cyanobacteria bacterium Yellowstone A-Prime).